Reading from the N-terminus, the 334-residue chain is 6-phosphogluconolactonase (334 aa).

It belongs to the cycloisomerase 2 family.

The enzyme catalyses 6-phospho-D-glucono-1,5-lactone + H2O = 6-phospho-D-gluconate + H(+). The protein operates within carbohydrate degradation; pentose phosphate pathway; D-ribulose 5-phosphate from D-glucose 6-phosphate (oxidative stage): step 2/3. Its function is as follows. Catalyzes the hydrolysis of 6-phosphogluconolactone to 6-phosphogluconate. In Yersinia pseudotuberculosis serotype O:1b (strain IP 31758), this protein is 6-phosphogluconolactonase.